The chain runs to 487 residues: Probable nuclear hormone receptor HR3 (487 aa).

Positions 48–123 (IIPCKVCGDK…LGMSRDAVKF (76 aa)) form a DNA-binding region, nuclear receptor. 2 consecutive NR C4-type zinc fingers follow at residues 51–71 (CKVCGDKSSGVHYGVITCEGC) and 87–111 (CPRNKQCVVDRVNRNRCQYCRLQKC). The interval 145 to 176 (MRAQSDAAPDSSVYDTQTPSSSDQLHHNNYNS) is disordered. A compositionally biased stretch (polar residues) spans 157-167 (VYDTQTPSSSD). One can recognise an NR LBD domain in the interval 237-480 (INDVLIKTLA…PALYKELFSI (244 aa)).

This sequence belongs to the nuclear hormone receptor family. NR1 subfamily.

The protein localises to the nucleus. Its function is as follows. Putative receptor whose ligand is not yet known. This is Probable nuclear hormone receptor HR3 from Drosophila melanogaster (Fruit fly).